The primary structure comprises 1075 residues: mRNA 3'-end-processing protein rna14 (1075 aa).

Disordered regions lie at residues serine 20–leucine 185 and isoleucine 215–proline 237. 2 stretches are compositionally biased toward polar residues: residues glutamate 54–proline 72 and proline 93–threonine 112. Over residues valine 120–tyrosine 133 the composition is skewed to acidic residues. HAT repeat units lie at residues asparagine 270–glutamate 302, asparagine 304–arginine 335, glutamine 346–serine 381, glutamine 395–glycine 428, threonine 465–glycine 498, and alanine 510–leucine 542. Disordered stretches follow at residues glutamate 621–asparagine 653 and proline 840–proline 941. Over residues glycine 868–proline 883 the composition is skewed to polar residues. Positions arginine 885–arginine 896 are enriched in basic and acidic residues. Polar residues predominate over residues alanine 925–serine 940.

The protein localises to the nucleus. Its subcellular location is the cytoplasm. Its function is as follows. Component of the cleavage factor IA (CFIA) complex, which is involved in the endonucleolytic cleavage during polyadenylation-dependent pre-mRNA 3'-end formation. The polypeptide is mRNA 3'-end-processing protein rna14 (rna14) (Emericella nidulans (strain FGSC A4 / ATCC 38163 / CBS 112.46 / NRRL 194 / M139) (Aspergillus nidulans)).